The sequence spans 307 residues: Serine/threonine-protein phosphatase 4 catalytic subunit (307 aa).

Positions 54, 56, 82, and 114 each coordinate Mn(2+). Residue histidine 115 is the Proton donor of the active site. Mn(2+) contacts are provided by histidine 164 and histidine 238. Leucine 307 carries the post-translational modification Leucine methyl ester.

The protein belongs to the PPP phosphatase family. PP-4 (PP-X) subfamily. In terms of assembly, serine/threonine-protein phosphatase 4 (PP4) occurs in different assemblies of the catalytic and one or more regulatory subunits. Probably part of a PP4 PPP4C-PPP4R2-PPP4R3 complex containing Pp4-19C, PPP4R2r and flfl. Interacts with Ptpa; thereby mediating basal localization of the Miranda (Mira) complex; probably by dephosphorylation of Mira. Mn(2+) serves as cofactor. Post-translationally, reversibly methyl esterified on Leu-307 by leucine carboxyl methyltransferase 1 (LCMT1) and protein phosphatase methylesterase 1 (PPME1). Carboxyl methylation influences the affinity of the catalytic subunit for the different regulatory subunits, thereby modulating the PP2A holoenzyme's substrate specificity, enzyme activity and cellular localization.

It localises to the cytoplasm. The protein localises to the nucleus. It is found in the cytoskeleton. Its subcellular location is the microtubule organizing center. The protein resides in the centrosome. The catalysed reaction is O-phospho-L-seryl-[protein] + H2O = L-seryl-[protein] + phosphate. It carries out the reaction O-phospho-L-threonyl-[protein] + H2O = L-threonyl-[protein] + phosphate. Functionally, protein phosphatase that regulates many processes such as microtubule organization at centrosomes. The probable PP4 complex Pp4-19C-PPP4R2r-flfl (PPP4C-PPP4R2-PPP4R3) is required to prevent caspase-induced cell death (in vitro). This is Serine/threonine-protein phosphatase 4 catalytic subunit (Pp4-19C) from Drosophila melanogaster (Fruit fly).